Reading from the N-terminus, the 157-residue chain is ATP synthase subunit b (157 aa).

A helical membrane pass occupies residues 7–29 (MFGQLIMFTMFTWFCMKFVWPPI).

The protein belongs to the ATPase B chain family. In terms of assembly, F-type ATPases have 2 components, F(1) - the catalytic core - and F(0) - the membrane proton channel. F(1) has five subunits: alpha(3), beta(3), gamma(1), delta(1), epsilon(1). F(0) has three main subunits: a(1), b(2) and c(10-14). The alpha and beta chains form an alternating ring which encloses part of the gamma chain. F(1) is attached to F(0) by a central stalk formed by the gamma and epsilon chains, while a peripheral stalk is formed by the delta and b chains.

The protein resides in the cell inner membrane. Its function is as follows. F(1)F(0) ATP synthase produces ATP from ADP in the presence of a proton or sodium gradient. F-type ATPases consist of two structural domains, F(1) containing the extramembraneous catalytic core and F(0) containing the membrane proton channel, linked together by a central stalk and a peripheral stalk. During catalysis, ATP synthesis in the catalytic domain of F(1) is coupled via a rotary mechanism of the central stalk subunits to proton translocation. Functionally, component of the F(0) channel, it forms part of the peripheral stalk, linking F(1) to F(0). This is ATP synthase subunit b from Ruthia magnifica subsp. Calyptogena magnifica.